The sequence spans 316 residues: Arabinooligosaccharides transport system permease protein AraP (316 aa).

7 helical membrane passes run 32–52 (VVPY…SFYP), 94–114 (TYMI…AVLL), 128–148 (ALFL…RLMF), 178–198 (MFLM…LYFL), 224–244 (FYVT…ISVI), 254–274 (FVFW…GYLY), and 283–303 (MGFG…ISIT). Residues 89–304 (LQNTTTYMIL…LIIFVISITQ (216 aa)) enclose the ABC transmembrane type-1 domain.

It belongs to the binding-protein-dependent transport system permease family. MalFG subfamily. In terms of assembly, the complex is composed of two ATP-binding proteins (MsmX), two transmembrane proteins (AraP and AraQ) and a solute-binding protein (AraN).

The protein resides in the cell membrane. In terms of biological role, part of the ABC transporter complex AraNPQ involved in the uptake of arabinooligosaccharides. Responsible for the translocation of the substrate across the membrane. In Halalkalibacterium halodurans (strain ATCC BAA-125 / DSM 18197 / FERM 7344 / JCM 9153 / C-125) (Bacillus halodurans), this protein is Arabinooligosaccharides transport system permease protein AraP (araP).